We begin with the raw amino-acid sequence, 422 residues long: Ena/VASP-like protein (422 aa).

Positions 4–118 (FEEFSEQSIC…NAMLFALNIM (115 aa)) constitute a WH1 domain. Over residues 120–135 (SQEGGPSSQRQVQNGP) the composition is skewed to polar residues. Disordered stretches follow at residues 120–139 (SQEGGPSSQRQVQNGPSPDE) and 147–375 (VMEQ…PAGS). Position 136 is a phosphoserine (S136). Residues 147 to 163 (VMEQHQQQRQESLERRT) are compositionally biased toward basic and acidic residues. The segment covering 175–186 (PSSAASAPVSCS) has biased composition (low complexity). A compositionally biased stretch (pro residues) spans 187 to 212 (GPPPPPPPPVPPPPTGATPPPPPPLP). Residues 228 to 248 (GLAAAIAGAKLRRVQRPEDAS) are EVH2 block A. The EVH2 stretch occupies residues 228-419 (GLAAAIAGAK…DAIRQELSGI (192 aa)). A KLKR motif is present at residues 237–240 (KLRR). The span at 248 to 259 (SGGSSPSGTSKS) shows a compositional bias: low complexity. Phosphoserine is present on residues S252 and S265. The interval 271–288 (GGLMEEMNKLLAKRRKAA) is EVH2 block B. Over residues 305 to 326 (EDPSTSPSPGTRAASQPPNSSE) the composition is skewed to polar residues. Residues S310, S312, S335, S337, S347, S355, S360, and S375 each carry the phosphoserine modification. The segment covering 327-337 (AGRKPWERSNS) has biased composition (basic and acidic residues). Positions 348 to 368 (RTPSVAKSPEAKSPLQSQPHS) are required for interaction with ZDHHC17. Positions 385–419 (DLDRMKQEILEEVVRELHKVKDEIIDAIRQELSGI) are EVH2 block C. A coiled-coil region spans residues 388 to 414 (RMKQEILEEVVRELHKVKDEIIDAIRQ).

It belongs to the Ena/VASP family. As to quaternary structure, homotetramer. Binds to the SH3 domains of ABL1, LYN and SRC. Also binds to profilin, with preference for isoform IIa of PFN2, and the WW domain of APBB1/FE65. Binds to SEMA6A. Interacts, via the Pro-rich region, with the C-terminal SH3 domain of DNMBP. Interacts with RAPH1. Binds, via the EVH1 domain, the Pro-rich domain of Listeria monocytogenes actA. Binds, via the EVH1 domain, the Pro-rich domain of ZYX. Interacts with FYB1. Interacts with ZDHHC17. In terms of processing, phosphorylated by PKA; phosphorylation abolishes binding to SH3 domains of ABL and SRC.

It localises to the cytoplasm. The protein resides in the cytoskeleton. Its subcellular location is the stress fiber. The protein localises to the cell projection. It is found in the lamellipodium. Its function is as follows. Ena/VASP proteins are actin-associated proteins involved in a range of processes dependent on cytoskeleton remodeling and cell polarity such as axon guidance and lamellipodial and filopodial dynamics in migrating cells. EVL enhances actin nucleation and polymerization. The chain is Ena/VASP-like protein (EVL) from Pongo abelii (Sumatran orangutan).